Reading from the N-terminus, the 425-residue chain is Malate transporter MleP (425 aa).

The next 11 membrane-spanning stretches (helical) occupy residues 11–31 (GISL…TLLG), 35–55 (LDMV…YFIG), 65–85 (LGGG…FHIV), 96–116 (FMGG…CGSI), 134–154 (IALI…MLIG), 196–216 (IFSQ…IGAL), 246–266 (IKLD…LLMA), 269–289 (ILNK…IVFI), 310–330 (VIMT…LIDL), 339–359 (WQFV…SWFL), and 401–421 (FAQM…GILI).

This sequence belongs to the 2-hydroxycarboxylate transporter (2-HCT) (TC 2.A.24) family.

The protein resides in the cell membrane. It carries out the reaction (S)-lactate(in) + (S)-malate(out) = (S)-lactate(out) + (S)-malate(in). It catalyses the reaction (R)-lactate(in) + (S)-malate(out) = (R)-lactate(out) + (S)-malate(in). The enzyme catalyses glycolate(in) + (S)-malate(out) = glycolate(out) + (S)-malate(in). Secondary transporter involved in malolactic fermentation. Catalyzes the uptake of divalent malate into the cell coupled to the exit of monovalent lactate, a product of malate degradation (precursor/product exchange). The malate/lactate exchange is electrogenic and results in the generation of a membrane potential. Is highly selective for the S-enantiomer of malate. In the absence of lactate, MleP can also catalyze the proton-dependent transport of malate. In vitro, transports a range of substrates that contain the 2-hydroxycarboxylate motif, HO-CR(2)-COO(-), with a preference for malate, lactate and glycolate. Modification of the OH or the COO(-) groups of the 2-hydroxycarboxylate motif drastically reduces the affinity of the transporter for the substrates, indicating their relevance in substrate recognition. Significant activity is also observed with some 2-oxocarboxylates. Transports only poorly citromalate. Citrate binds to MleP but is not translocated. The chain is Malate transporter MleP from Lactococcus lactis subsp. lactis (strain IL1403) (Streptococcus lactis).